The sequence spans 438 residues: Glutamate--tRNA ligase 2 (438 aa).

The short motif at 6–16 (PSPTGDMHTGN) is the 'HIGH' region element. Residues 231–235 (KMSKR) carry the 'KMSKS' region motif. Position 234 (Lys-234) interacts with ATP.

The protein belongs to the class-I aminoacyl-tRNA synthetase family. Glutamate--tRNA ligase type 1 subfamily. In terms of assembly, monomer.

It localises to the cytoplasm. The catalysed reaction is tRNA(Glu) + L-glutamate + ATP = L-glutamyl-tRNA(Glu) + AMP + diphosphate. Its function is as follows. Catalyzes the attachment of glutamate to tRNA(Glu) in a two-step reaction: glutamate is first activated by ATP to form Glu-AMP and then transferred to the acceptor end of tRNA(Glu). The polypeptide is Glutamate--tRNA ligase 2 (Wolinella succinogenes (strain ATCC 29543 / DSM 1740 / CCUG 13145 / JCM 31913 / LMG 7466 / NCTC 11488 / FDC 602W) (Vibrio succinogenes)).